Here is a 913-residue protein sequence, read N- to C-terminus: Isoleucine--tRNA ligase (913 aa).

A 'HIGH' region motif is present at residues 57 to 67 (PYANGDIHLGT). Position 549 (Glu-549) interacts with L-isoleucyl-5'-AMP. A 'KMSKS' region motif is present at residues 590–594 (KMSKS). Position 593 (Lys-593) interacts with ATP. Zn(2+) is bound by residues Cys-881, Cys-884, Cys-901, and Cys-904.

Belongs to the class-I aminoacyl-tRNA synthetase family. IleS type 1 subfamily. In terms of assembly, monomer. Requires Zn(2+) as cofactor.

Its subcellular location is the cytoplasm. It catalyses the reaction tRNA(Ile) + L-isoleucine + ATP = L-isoleucyl-tRNA(Ile) + AMP + diphosphate. Catalyzes the attachment of isoleucine to tRNA(Ile). As IleRS can inadvertently accommodate and process structurally similar amino acids such as valine, to avoid such errors it has two additional distinct tRNA(Ile)-dependent editing activities. One activity is designated as 'pretransfer' editing and involves the hydrolysis of activated Val-AMP. The other activity is designated 'posttransfer' editing and involves deacylation of mischarged Val-tRNA(Ile). In Fervidobacterium nodosum (strain ATCC 35602 / DSM 5306 / Rt17-B1), this protein is Isoleucine--tRNA ligase.